A 271-amino-acid chain; its full sequence is Tryptophan synthase alpha chain (271 aa).

Catalysis depends on proton acceptor residues E49 and D60.

This sequence belongs to the TrpA family. Tetramer of two alpha and two beta chains.

It carries out the reaction (1S,2R)-1-C-(indol-3-yl)glycerol 3-phosphate + L-serine = D-glyceraldehyde 3-phosphate + L-tryptophan + H2O. Its pathway is amino-acid biosynthesis; L-tryptophan biosynthesis; L-tryptophan from chorismate: step 5/5. In terms of biological role, the alpha subunit is responsible for the aldol cleavage of indoleglycerol phosphate to indole and glyceraldehyde 3-phosphate. The sequence is that of Tryptophan synthase alpha chain from Burkholderia pseudomallei (strain K96243).